We begin with the raw amino-acid sequence, 314 residues long: Methionyl-tRNA formyltransferase (314 aa).

110 to 113 (SLLP) lines the (6S)-5,6,7,8-tetrahydrofolate pocket.

It belongs to the Fmt family.

The catalysed reaction is L-methionyl-tRNA(fMet) + (6R)-10-formyltetrahydrofolate = N-formyl-L-methionyl-tRNA(fMet) + (6S)-5,6,7,8-tetrahydrofolate + H(+). Its function is as follows. Attaches a formyl group to the free amino group of methionyl-tRNA(fMet). The formyl group appears to play a dual role in the initiator identity of N-formylmethionyl-tRNA by promoting its recognition by IF2 and preventing the misappropriation of this tRNA by the elongation apparatus. This Bacillus thuringiensis subsp. konkukian (strain 97-27) protein is Methionyl-tRNA formyltransferase.